A 442-amino-acid polypeptide reads, in one-letter code: Probable carboxypeptidase PABG_01461 (442 aa).

The first 20 residues, 1–20, serve as a signal peptide directing secretion; sequence MKLQYLVALLSVQAVPPVTA. Asn102 carries N-linked (GlcNAc...) asparagine glycosylation. Asp160 contacts Zn(2+). Residue Glu192 is the Proton acceptor of the active site. Residue Glu193 coordinates Zn(2+). The N-linked (GlcNAc...) asparagine glycan is linked to Asn343.

This sequence belongs to the peptidase M20A family. It depends on Zn(2+) as a cofactor.

Its subcellular location is the secreted. In Paracoccidioides brasiliensis (strain Pb03), this protein is Probable carboxypeptidase PABG_01461.